A 288-amino-acid chain; its full sequence is Elongation factor Ts (288 aa).

The interval 82-85 (TDFV) is involved in Mg(2+) ion dislocation from EF-Tu.

The protein belongs to the EF-Ts family.

It localises to the cytoplasm. Its function is as follows. Associates with the EF-Tu.GDP complex and induces the exchange of GDP to GTP. It remains bound to the aminoacyl-tRNA.EF-Tu.GTP complex up to the GTP hydrolysis stage on the ribosome. The protein is Elongation factor Ts of Chlorobium luteolum (strain DSM 273 / BCRC 81028 / 2530) (Pelodictyon luteolum).